The chain runs to 140 residues: Putative pre-16S rRNA nuclease (140 aa).

This sequence belongs to the YqgF nuclease family.

It localises to the cytoplasm. Functionally, could be a nuclease involved in processing of the 5'-end of pre-16S rRNA. The protein is Putative pre-16S rRNA nuclease of Yersinia pseudotuberculosis serotype O:1b (strain IP 31758).